The primary structure comprises 141 residues: Hemoglobin subunit alpha (141 aa).

Positions 1–141 (VLSPADKTNV…VSTVLTSKYR (141 aa)) constitute a Globin domain. Ser-3 is modified (phosphoserine). At Lys-7 the chain carries N6-succinyllysine. Position 8 is a phosphothreonine (Thr-8). Lys-11 carries the post-translational modification N6-succinyllysine. N6-acetyllysine; alternate is present on Lys-16. N6-succinyllysine; alternate is present on Lys-16. At Tyr-24 the chain carries Phosphotyrosine. At Ser-35 the chain carries Phosphoserine. The residue at position 40 (Lys-40) is an N6-succinyllysine. Ser-49 is modified (phosphoserine). Residue His-58 participates in O2 binding. Position 87 (His-87) interacts with heme b. Residue Ser-102 is modified to Phosphoserine. Thr-108 is subject to Phosphothreonine. A Phosphoserine modification is found at Ser-124. Phosphothreonine occurs at positions 134 and 137. Ser-138 carries the post-translational modification Phosphoserine.

Belongs to the globin family. As to quaternary structure, heterotetramer of two alpha chains and two beta chains. In terms of tissue distribution, red blood cells.

In terms of biological role, involved in oxygen transport from the lung to the various peripheral tissues. This Tamias merriami (Merriam's chipmunk) protein is Hemoglobin subunit alpha.